Reading from the N-terminus, the 178-residue chain is Putative adenylate kinase (178 aa).

5 residues coordinate ATP: glycine 10, glycine 12, lysine 13, serine 14, and serine 15. The interval 29–50 (TVVELAEKHGCIIDEEDGEIVI) is NMP. The segment at 94-104 (GRNWSEEKLLE) is LID. Arginine 95 is an ATP binding site.

This sequence belongs to the adenylate kinase family. AK6 subfamily. Interacts with uS11. Not a structural component of 40S pre-ribosomes, but transiently interacts with them by binding to uS11.

It catalyses the reaction AMP + ATP = 2 ADP. The enzyme catalyses ATP + H2O = ADP + phosphate + H(+). Its function is as follows. Broad-specificity nucleoside monophosphate (NMP) kinase that catalyzes the reversible transfer of the terminal phosphate group between nucleoside triphosphates and monophosphates. Also has ATPase activity. Involved in the late maturation steps of the 30S ribosomal particles, specifically 16S rRNA maturation. While NMP activity is not required for ribosome maturation, ATPase activity is. Associates transiently with small ribosomal subunit protein uS11. ATP hydrolysis breaks the interaction with uS11. May temporarily remove uS11 from the ribosome to enable a conformational change of the ribosomal RNA that is needed for the final maturation step of the small ribosomal subunit. This is Putative adenylate kinase from Archaeoglobus fulgidus (strain ATCC 49558 / DSM 4304 / JCM 9628 / NBRC 100126 / VC-16).